The following is a 250-amino-acid chain: Triosephosphate isomerase, cytosolic (250 aa).

Positions 1 and 3 each coordinate substrate. His-87 acts as the Electrophile in catalysis. Glu-160 functions as the Proton acceptor in the catalytic mechanism.

This sequence belongs to the triosephosphate isomerase family. In terms of assembly, homodimer.

It localises to the cytoplasm. The enzyme catalyses D-glyceraldehyde 3-phosphate = dihydroxyacetone phosphate. Its pathway is carbohydrate biosynthesis; gluconeogenesis. The protein operates within carbohydrate degradation; glycolysis; D-glyceraldehyde 3-phosphate from glycerone phosphate: step 1/1. This chain is Triosephosphate isomerase, cytosolic (TPI1), found in Gracilaria gracilis (Red alga).